The following is a 204-amino-acid chain: Urease accessory protein UreG (204 aa).

12-19 serves as a coordination point for GTP; that stretch reads GPVGSGKT.

The protein belongs to the SIMIBI class G3E GTPase family. UreG subfamily. As to quaternary structure, homodimer. UreD, UreF and UreG form a complex that acts as a GTP-hydrolysis-dependent molecular chaperone, activating the urease apoprotein by helping to assemble the nickel containing metallocenter of UreC. The UreE protein probably delivers the nickel.

It is found in the cytoplasm. Functionally, facilitates the functional incorporation of the urease nickel metallocenter. This process requires GTP hydrolysis, probably effectuated by UreG. The polypeptide is Urease accessory protein UreG (Pseudomonas aeruginosa (strain LESB58)).